Reading from the N-terminus, the 706-residue chain is Drebrin (706 aa).

N-acetylalanine is present on Ala-2. The region spanning Gly-3–Ser-134 is the ADF-H domain. Ser-141 and Ser-142 each carry phosphoserine. Basic and acidic residues predominate over residues Glu-209–Arg-236. Residues Glu-209–Val-497 are disordered. Ser-241 carries the phosphoserine modification. Over residues Asp-288–Glu-298 the composition is skewed to basic and acidic residues. Over residues Ser-331–Pro-345 the composition is skewed to low complexity. Ser-344 carries the post-translational modification Phosphoserine. Positions Arg-357–Pro-366 are enriched in polar residues. Phosphothreonine occurs at positions 379 and 383. Residues Pro-382–Ile-396 show a composition bias toward polar residues. Ser-385, Ser-387, and Ser-393 each carry phosphoserine. Thr-394 is subject to Phosphothreonine. Positions Gln-411–Thr-422 are enriched in pro residues. A compositionally biased stretch (low complexity) spans Ala-453–Val-497. A Phosphoserine modification is found at Ser-468. Position 550 is a phosphothreonine (Thr-550). The segment at Glu-633–Val-677 is disordered. Polar residues predominate over residues Asn-639–Ser-651. A Phosphoserine modification is found at Ser-658.

Interacts with RUFY3. Interacts with CXCR4; this interaction is enhanced by antigenic stimulation. Interacts (via ADF-H domain) with ZMYND8 (via N-terminus); the interaction leads to sequestering of ZMYND8 in the cytoplasm. In terms of tissue distribution, expressed in the hippocampus, with expression in the pyramidal cells of CA1, CA2 and CA3 and in the granule cells of the dentate gyrus (at protein level). Highly expressed in brain, also present in stomach and to a lesser degree in kidney, colon, and urinary bladder. The E2 isoform is specifically expressed in adult stomach, kidney, and cultured cells.

It is found in the cytoplasm. It localises to the cell projection. Its subcellular location is the dendrite. The protein resides in the cell cortex. The protein localises to the cell junction. It is found in the growth cone. Its function is as follows. Actin cytoskeleton-organizing protein that plays a role in the formation of cell projections. Required for actin polymerization at immunological synapses (IS) and for the recruitment of the chemokine receptor CXCR4 to IS. Plays a role in dendritic spine morphogenesis and organization, including the localization of the dopamine receptor DRD1 to the dendritic spines. Involved in memory-related synaptic plasticity in the hippocampus. This chain is Drebrin (Dbn1), found in Mus musculus (Mouse).